The primary structure comprises 463 residues: Probable transport protein HsrA (463 aa).

Helical transmembrane passes span 10–30, 49–69, 82–102, 107–127, 139–159, 165–185, 197–217, 225–245, 267–287, 298–318, 328–348, 354–374, 393–413, and 429–449; these read GLAW…TILN, MAII…AWAA, VFTF…ESLI, IQGI…IQAV, MATA…WLVI, WIFL…GSVM, WTGF…LDLL, SVTY…CGYA, IIAN…LPLM, MSGW…ILIG, TTLI…AWLD, TWII…FTSI, VLSI…SIIL, and AFSY…WSLM.

It belongs to the major facilitator superfamily. EmrB family.

The protein resides in the cell inner membrane. The chain is Probable transport protein HsrA (hsrA) from Haemophilus influenzae (strain ATCC 51907 / DSM 11121 / KW20 / Rd).